Consider the following 267-residue polypeptide: MADRRNLFFFYGDDKAKLVEKMKPIYRILEENGFTILDHPKNANAIVSVGDDATFLQAVRKTGFREDCLYAGISTKDEISFYCDFHIDHVDIALQEITKNEIEVRKYPTIEVDVDGSTSFHCLNEFSLRSSIIKTFVVDVHVDNLYFETFRGDGLVVSTPTGSTAYNKSLRGAVVDPLIPCFQVSELASLNNNTYRTLGSPFILNHERTLTLKLRPDGNDYPVIGMDNEALSIKQVEKAVVRLSDKQIKTVKLKNNSFWEKVQRTFL.

Catalysis depends on Asp-52, which acts as the Proton acceptor. NAD(+) contacts are provided by residues 52–53 (DA), 124–125 (NE), Arg-151, Asp-153, 164–169 (TAYNKS), and Ala-188.

Belongs to the NAD kinase family. Requires a divalent metal cation as cofactor.

It localises to the cytoplasm. It carries out the reaction NAD(+) + ATP = ADP + NADP(+) + H(+). Involved in the regulation of the intracellular balance of NAD and NADP, and is a key enzyme in the biosynthesis of NADP. Catalyzes specifically the phosphorylation on 2'-hydroxyl of the adenosine moiety of NAD to yield NADP. The sequence is that of NAD kinase 2 from Bacillus cereus (strain ATCC 10987 / NRS 248).